Reading from the N-terminus, the 1249-residue chain is MSEGTNYTPSQQAVIAQQGNNLLVSASAGSGKTTVLIERIMRKILAGTNIDQLLVVTFTNLAAKHMKQKLESQINKRISQLMTDNPAQTTASPAIRQLRQQLNLLGVANISTLDAFCLRVIQRYYYVIDLDPVFRLLTDNTEGLLIRDQVWDSVREQLYDEDGTLFDLLTANFSNDRSDDGLSRLIFRLFDFAQSTPDPEGWLSKLPEPYQVDEEALTASAFYQQQLLPLLINEVDGMQMKLRQAQKVATDADLVPKTLEVLATAQKTLTTLREQLATASWNELRTQVATFKIGALKKTYKDEPEKTARAKTMGTFVDGVKKQMTTLSETYFAADEQQVLDIMVGAKSIVTELVDATKQFKTAFAAEKRRRHVLDFSDLEHLTLQILTSDNESSQAALAQLRAQFEEVMVDEYQDINSLQESILQLLARDQPGNMFMVGDVKQSIYQFRLADPLLFLHKYHDFGTNPEHGERIVLAENFRSVANVDHLTNLIFSQLMDAPVGQIDYDEAAYLKYGPKDYPADMPQTTNLLLYQTETDKSTEDVSTDETNFSIDDPAVGSITMVAQKILALKAQDKPIYERANGEYRPFRYSDVALLVPTRNHNLTIIDVFKRYHIPVVVNDAQNYFQTTEIRIMMALLSIIDNPYQDIPLVAVLRSPIVGLDENQLVYLRIQNKTSDYFQAVQDFYHHYPTGPATEYGDQVYAKIETFLTQLTEFRDLARRNQIVTLIWQIYERTGFLDYVGGMPAGKQRQANLHALYERAYTYEQGSFKGLFQFVRFIRRMQEKDQDLAAAVAETDAEAVNVMTIHGSKGLEYPVIFVMDMDKQFNQTDTRSSALLDREAGIGITYLDPETRVKYPTLPQVVTKQVVSKKMRAEEMRKLYVAMTRAQQQLYLVGTIKDIDTATEKWRQAFASDGRVLSAQARIAATNQLDWVGMAVMRHPAMKAYWGDEWPNYELTDDPTKLAVELGDATTVLAEQSEAVTDTQPDALELVEQQVTIDVDQVTRDYLTTLLNFHYPHQASTTTTAYQSVSEVKRIFEDPDTPLMNANPTVSQRRSRPTSRFVTGSLELPQFLQTTQAPTSAEVGSATHLVLEQLDLTKPVNETTVQSTIDGLVANRVLTTNVAKLIAVDTIVAFYQSALGSQILDNPAKVHREVPFSLLIPARQIFDVDEHETGKVLIHGIIDGYLETADGLTLFDYKTDHVKRPEDLKTRYAGQVKLYAAALASMYPGKVTKQYLYSLPQQVFVPVN.

The region spanning 5 to 482 is the UvrD-like helicase ATP-binding domain; the sequence is TNYTPSQQAV…IVLAENFRSV (478 aa). Residue 26–33 coordinates ATP; it reads ASAGSGKT. Positions 521–811 constitute a UvrD-like helicase C-terminal domain; it reads ADMPQTTNLL…NVMTIHGSKG (291 aa).

The protein belongs to the helicase family. AddA subfamily. As to quaternary structure, heterodimer of AddA and AddB/RexB. Mg(2+) is required as a cofactor.

The catalysed reaction is Couples ATP hydrolysis with the unwinding of duplex DNA by translocating in the 3'-5' direction.. It catalyses the reaction ATP + H2O = ADP + phosphate + H(+). In terms of biological role, the heterodimer acts as both an ATP-dependent DNA helicase and an ATP-dependent, dual-direction single-stranded exonuclease. Recognizes the chi site generating a DNA molecule suitable for the initiation of homologous recombination. The AddA nuclease domain is required for chi fragment generation; this subunit has the helicase and 3' -&gt; 5' nuclease activities. This is ATP-dependent helicase/nuclease subunit A from Lactiplantibacillus plantarum (strain ATCC BAA-793 / NCIMB 8826 / WCFS1) (Lactobacillus plantarum).